A 91-amino-acid chain; its full sequence is Small ribosomal subunit protein uS19 (91 aa).

Belongs to the universal ribosomal protein uS19 family.

In terms of biological role, protein S19 forms a complex with S13 that binds strongly to the 16S ribosomal RNA. In Marinobacter nauticus (strain ATCC 700491 / DSM 11845 / VT8) (Marinobacter aquaeolei), this protein is Small ribosomal subunit protein uS19.